The following is a 329-amino-acid chain: MASQLTDAFARKYYYLRLSITDVCNFRCTYCLPDGYKPSGVTNKGFLTVDEIRRVTRAFASLGTEKVRLTGGEPSLRRDFTDIIAAVRENDAIRQIAVTTNGYRLERDVANWRDAGLTGINVSVDSLDARQFHAITGQDKFNQVMAGIDAAFEAGFEKVKVNTVLMRDVNHHQLDTFLNWIQHRPIQLRFIELMETGEGSELFRKHHISGQVLRDELLRRGWIHQLRQRSDGPAQVFCHPDYAGEIGLIMPYEKDFCATCNRLRVSSIGKLHLCLFGEGGVNLRDLLEDDTQQQALEARISAALREKKQTHFLHQNNTGITQNLSYIGG.

The 227-residue stretch at 8–234 (AFARKYYYLR…QLRQRSDGPA (227 aa)) folds into the Radical SAM core domain. R17 contributes to the GTP binding site. 2 residues coordinate [4Fe-4S] cluster: C24 and C28. Y30 contributes to the S-adenosyl-L-methionine binding site. Residue C31 coordinates [4Fe-4S] cluster. Residue R68 coordinates GTP. Position 72 (G72) interacts with S-adenosyl-L-methionine. Position 99 (T99) interacts with GTP. An S-adenosyl-L-methionine-binding site is contributed by S123. K160 is a GTP binding site. Residue M194 coordinates S-adenosyl-L-methionine. [4Fe-4S] cluster is bound by residues C257 and C260. 262–264 (RLR) lines the GTP pocket. Position 274 (C274) interacts with [4Fe-4S] cluster.

Belongs to the radical SAM superfamily. MoaA family. Monomer and homodimer. The cofactor is [4Fe-4S] cluster.

It carries out the reaction GTP + AH2 + S-adenosyl-L-methionine = (8S)-3',8-cyclo-7,8-dihydroguanosine 5'-triphosphate + 5'-deoxyadenosine + L-methionine + A + H(+). The protein operates within cofactor biosynthesis; molybdopterin biosynthesis. Functionally, catalyzes the cyclization of GTP to (8S)-3',8-cyclo-7,8-dihydroguanosine 5'-triphosphate. The polypeptide is GTP 3',8-cyclase (Escherichia coli O17:K52:H18 (strain UMN026 / ExPEC)).